The following is a 550-amino-acid chain: Arginine--tRNA ligase (550 aa).

The 'HIGH' region motif lies at 130-140; the sequence is ANPTGPIHLGG.

The protein belongs to the class-I aminoacyl-tRNA synthetase family. In terms of assembly, monomer.

The protein resides in the cytoplasm. It carries out the reaction tRNA(Arg) + L-arginine + ATP = L-arginyl-tRNA(Arg) + AMP + diphosphate. This Rhodococcus jostii (strain RHA1) protein is Arginine--tRNA ligase.